Here is a 332-residue protein sequence, read N- to C-terminus: Glycerol-3-phosphate dehydrogenase [NAD(P)+] (332 aa).

Positions 10, 11, 31, and 105 each coordinate NADPH. Sn-glycerol 3-phosphate-binding residues include K105, G136, and S138. Position 140 (A140) interacts with NADPH. Positions 191, 244, 254, 255, and 256 each coordinate sn-glycerol 3-phosphate. K191 acts as the Proton acceptor in catalysis. R255 is an NADPH binding site. Residues V279 and E281 each coordinate NADPH.

The protein belongs to the NAD-dependent glycerol-3-phosphate dehydrogenase family.

Its subcellular location is the cytoplasm. The enzyme catalyses sn-glycerol 3-phosphate + NAD(+) = dihydroxyacetone phosphate + NADH + H(+). It catalyses the reaction sn-glycerol 3-phosphate + NADP(+) = dihydroxyacetone phosphate + NADPH + H(+). Its pathway is membrane lipid metabolism; glycerophospholipid metabolism. Functionally, catalyzes the reduction of the glycolytic intermediate dihydroxyacetone phosphate (DHAP) to sn-glycerol 3-phosphate (G3P), the key precursor for phospholipid synthesis. The protein is Glycerol-3-phosphate dehydrogenase [NAD(P)+] of Anaeromyxobacter sp. (strain K).